The sequence spans 604 residues: Protein TAX4 (604 aa).

5 disordered regions span residues 38-77 (HPNG…PRSI), 133-249 (FSNR…RQQE), 267-300 (GTLP…QENL), 338-380 (DETF…KGLK), and 394-428 (PFPH…NEDK). Polar residues predominate over residues 176–185 (YDNNVRSRSI). Low complexity-rich tracts occupy residues 186-203 (SPQV…SISS) and 224-240 (SMSS…KASL). 3 stretches are compositionally biased toward basic residues: residues 276–290 (SQRK…HKLL), 366–379 (KKKK…KKGL), and 396–421 (PHHH…HTSS). Residues 469 to 559 (ANEDDESHLQ…RVWNSVDGYV (91 aa)) enclose the EH domain.

It belongs to the IRS4 family. In terms of assembly, interacts with INP51.

Its function is as follows. With IRS4, acts as a positive regulator of INP51 activity and phosphatidylinositol 4,5-bisphosphate turnover. Negatively regulates signaling through the cell integrity pathway, including the MAP kinase SLT2. In Saccharomyces cerevisiae (strain YJM789) (Baker's yeast), this protein is Protein TAX4 (TAX4).